We begin with the raw amino-acid sequence, 387 residues long: Formate-dependent phosphoribosylglycinamide formyltransferase (387 aa).

Residues 12-13 and E72 contribute to the N(1)-(5-phospho-beta-D-ribosyl)glycinamide site; that span reads EL. Residues R104, K145, 150–155, 185–188, and E193 each bind ATP; these read SSGKGQ and EEFI. The 192-residue stretch at 109 to 300 folds into the ATP-grasp domain; it reads DLAARELGLA…EFELHLRAVL (192 aa). Residues E258 and E270 each coordinate Mg(2+). Residues D277, K347, and 354 to 355 contribute to the N(1)-(5-phospho-beta-D-ribosyl)glycinamide site; that span reads RR.

It belongs to the PurK/PurT family. As to quaternary structure, homodimer.

The catalysed reaction is N(1)-(5-phospho-beta-D-ribosyl)glycinamide + formate + ATP = N(2)-formyl-N(1)-(5-phospho-beta-D-ribosyl)glycinamide + ADP + phosphate + H(+). The protein operates within purine metabolism; IMP biosynthesis via de novo pathway; N(2)-formyl-N(1)-(5-phospho-D-ribosyl)glycinamide from N(1)-(5-phospho-D-ribosyl)glycinamide (formate route): step 1/1. Involved in the de novo purine biosynthesis. Catalyzes the transfer of formate to 5-phospho-ribosyl-glycinamide (GAR), producing 5-phospho-ribosyl-N-formylglycinamide (FGAR). Formate is provided by PurU via hydrolysis of 10-formyl-tetrahydrofolate. The sequence is that of Formate-dependent phosphoribosylglycinamide formyltransferase from Anaeromyxobacter dehalogenans (strain 2CP-C).